Here is a 431-residue protein sequence, read N- to C-terminus: Glutamate-1-semialdehyde 2,1-aminomutase 1 (431 aa).

An N6-(pyridoxal phosphate)lysine modification is found at K268.

It belongs to the class-III pyridoxal-phosphate-dependent aminotransferase family. HemL subfamily. In terms of assembly, homodimer. Requires pyridoxal 5'-phosphate as cofactor.

The protein resides in the cytoplasm. It catalyses the reaction (S)-4-amino-5-oxopentanoate = 5-aminolevulinate. The protein operates within porphyrin-containing compound metabolism; protoporphyrin-IX biosynthesis; 5-aminolevulinate from L-glutamyl-tRNA(Glu): step 2/2. This is Glutamate-1-semialdehyde 2,1-aminomutase 1 from Bacillus pumilus (strain SAFR-032).